Consider the following 57-residue polypeptide: Small hydrophobic protein (57 aa).

Residues 1 to 8 are Virion surface-facing; sequence MPAIQPPL. The chain crosses the membrane as a helical span at residues 9–29; the sequence is YLTFLLLILLYRIITLYVWVV. Residues 30–57 lie on the Intravirion side of the membrane; the sequence is STITYKTAVRHAALYQRSLFRWSFDHSL.

The protein belongs to the rubulavirus small hydrophobic protein family. As to quaternary structure, interacts with host TNFRSF1A, RIPK1 and IRAK1; these interactions interfere with host NF-kappa-B activation at the level of receptor complexes. Interacts with host protein UBQLN4.

Its subcellular location is the virion membrane. The protein localises to the host cell membrane. In terms of biological role, plays a role in the inhibition of the host NF-kappa-B pathway. This inhibition occurs at the receptor level, by preventing the signaling of TNFR1 as well as IL-1R and TLR3. This is Small hydrophobic protein (SH) from Mumps virus (strain Belfast) (MuV).